The following is a 600-amino-acid chain: UvrABC system protein C (600 aa).

The GIY-YIG domain occupies 15 to 92 (DKPGCYLMKD…IKKYQPYYNV (78 aa)). In terms of domain architecture, UVR spans 197–232 (AQVKQDLTEKMTQASMDLEFERAAEIRDQLKYIEQT).

It belongs to the UvrC family. Interacts with UvrB in an incision complex.

Its subcellular location is the cytoplasm. The UvrABC repair system catalyzes the recognition and processing of DNA lesions. UvrC both incises the 5' and 3' sides of the lesion. The N-terminal half is responsible for the 3' incision and the C-terminal half is responsible for the 5' incision. The sequence is that of UvrABC system protein C from Lactobacillus johnsonii (strain CNCM I-12250 / La1 / NCC 533).